Consider the following 205-residue polypeptide: Holliday junction branch migration complex subunit RuvA (205 aa).

Residues 1–64 (MIGKLKGSIE…EDQLKLFGFV (64 aa)) form a domain I region. The domain II stretch occupies residues 65–143 (SALEREWFNL…AFAGDASASI (79 aa)). Positions 144-153 (GLKQELGEGV) are flexible linker. The tract at residues 153-205 (VASAPVADAVSALTNLGYSRDQAANAVAAALKNGGEGGDSAKLIRLGLKELSR) is domain III.

It belongs to the RuvA family. As to quaternary structure, homotetramer. Forms an RuvA(8)-RuvB(12)-Holliday junction (HJ) complex. HJ DNA is sandwiched between 2 RuvA tetramers; dsDNA enters through RuvA and exits via RuvB. An RuvB hexamer assembles on each DNA strand where it exits the tetramer. Each RuvB hexamer is contacted by two RuvA subunits (via domain III) on 2 adjacent RuvB subunits; this complex drives branch migration. In the full resolvosome a probable DNA-RuvA(4)-RuvB(12)-RuvC(2) complex forms which resolves the HJ.

It localises to the cytoplasm. Its function is as follows. The RuvA-RuvB-RuvC complex processes Holliday junction (HJ) DNA during genetic recombination and DNA repair, while the RuvA-RuvB complex plays an important role in the rescue of blocked DNA replication forks via replication fork reversal (RFR). RuvA specifically binds to HJ cruciform DNA, conferring on it an open structure. The RuvB hexamer acts as an ATP-dependent pump, pulling dsDNA into and through the RuvAB complex. HJ branch migration allows RuvC to scan DNA until it finds its consensus sequence, where it cleaves and resolves the cruciform DNA. The sequence is that of Holliday junction branch migration complex subunit RuvA from Agrobacterium fabrum (strain C58 / ATCC 33970) (Agrobacterium tumefaciens (strain C58)).